The sequence spans 351 residues: Ceramide hydroxylase (351 aa).

4 helical membrane passes run 26-46 (AAIY…GFLI), 47-67 (AATT…MLAL), 141-161 (GFLF…AILI), and 204-224 (VACW…VVPV).

It belongs to the fatty acid desaturase type 1 family.

The protein localises to the cell inner membrane. The protein operates within lipid metabolism; sphingolipid metabolism. Involved in de novo bacterial ceramide synthesis. The chain is Ceramide hydroxylase from Caulobacter vibrioides (strain NA1000 / CB15N) (Caulobacter crescentus).